Consider the following 569-residue polypeptide: Hemin/hemoglobin-binding protein 2 (569 aa).

An N-terminal signal peptide occupies residues 1-28 (MKKLWKKGLVAFLALTLIFQLIPGFASA). 3 NEAT domains span residues 34-173 (KDGG…FKVI), 184-307 (LSDG…ATAA), and 360-484 (LNNH…IKDI). Residues 204-205 (SS), tyrosine 280, and tyrosine 289 each bind heme. Residues 307–357 (ASSYPGSDETPPVVNPGETNPPVTKPDPGTTNPPVTTPPTTPSKPAVVDPK) are disordered. The segment covering 502–511 (TGNVASNNNA) has biased composition (polar residues). The interval 502–537 (TGNVASNNNAGPKLAKPDFDDTNSVQKTASKTEKNA) is disordered. The short motif at 536 to 540 (NAKTN) is the NXZTN sorting signal element. Pentaglycyl murein peptidoglycan amidated threonine is present on threonine 539. Positions 540 to 569 (NDSSSMVWYITLFGASFLYLAYRLKRKRLS) are cleaved as a propeptide — removed by sortase B.

It localises to the cell surface. Its subcellular location is the secreted. The protein localises to the cell wall. Is overexpressed in mecA, clpC and clpP mutants, suggesting the protein level is controlled by MecA, ClpC and ClpP (at protein level). Functionally, acts as an extracellular and cell wall-bound hemophore; scavenges host heme and hemoglobin from the environment and also serves as a cell wall receptor for both. At low hemin (Hn) and hemoglobin (Hb) concentrations adsorbs Hn/Hb and presumably directs it to membrane transporters. Soluble Hbp2 can probably pass Hn/Hb to cell wall-anchored Hbp2, and both forms can accept Hn/Hb from Hbp1. May be involved in crossing the digestive barrier in infected animals. Binds host hemin. Binds host hemoglobin with affinity in the nanomolar range. In Listeria monocytogenes serovar 1/2a (strain ATCC BAA-679 / EGD-e), this protein is Hemin/hemoglobin-binding protein 2.